A 293-amino-acid chain; its full sequence is MKTLQATFFLVAFVPLVKPAPPIQQDSPKFYEYDTDIVTGSLIQQDYEMLPKDAIKDGTNVSLDTGLRLQADDSELSARPTKDTNLPTCLLCVCLSGSVYCEEIDIEAVPPLPKETAYLYARFNKIKRIAVSDFADITTLRRIDFSGNMIEEIEDGAFSKLLLLEELSLAENRLVKLPVLPPKLTTFNANQNRIKSRGIKNNAFKKLTNLAYLYLGHNALESVPLNLPESLRILHLQHNNITTITDDTFCKSNNTRYIRTRMDEIRMEGNPILLAKHVNAFSCLKTLPVGTYY.

The signal sequence occupies residues 1-19 (MKTLQATFFLVAFVPLVKP). Asn-60 carries an N-linked (GlcNAc...) asparagine glycan. 7 LRR repeats span residues 107 to 126 (EAVP…FNKI), 127 to 150 (KRIA…GNMI), 151 to 174 (EEIE…ENRL), 175 to 194 (VKLP…QNRI), 195 to 220 (KSRG…HNAL), 221 to 241 (ESVP…HNNI), and 242 to 272 (TTIT…GNPI). N-linked (GlcNAc...) asparagine glycans are attached at residues Asn-240 and Asn-253. Cys-250 and Cys-283 are joined by a disulfide.

It belongs to the small leucine-rich proteoglycan (SLRP) family. SLRP class III subfamily. Contains keratan sulfate. Expressed in many tissues.

It localises to the secreted. It is found in the extracellular space. The protein resides in the extracellular matrix. Functionally, induces bone formation in conjunction with TGF-beta-1 or TGF-beta-2. The protein is Mimecan (OGN) of Coturnix japonica (Japanese quail).